Consider the following 136-residue polypeptide: Large ribosomal subunit protein bL17 (136 aa).

The protein belongs to the bacterial ribosomal protein bL17 family. Part of the 50S ribosomal subunit. Contacts protein L32.

The protein is Large ribosomal subunit protein bL17 of Rickettsia conorii (strain ATCC VR-613 / Malish 7).